Here is a 385-residue protein sequence, read N- to C-terminus: Benzoate O-methyltransferase (385 aa).

Tyrosine 18 provides a ligand contact to S-adenosyl-L-homocysteine. Residue glutamine 25 coordinates benzoate. 6 residues coordinate S-adenosyl-L-homocysteine: cysteine 59, asparagine 64, aspartate 106, leucine 107, serine 145, and tyrosine 146. Tryptophan 167 contributes to the benzoate binding site. Mg(2+) contacts are provided by asparagine 184, glutamate 270, phenylalanine 272, and asparagine 273.

The protein belongs to the methyltransferase superfamily. Type-7 methyltransferase family. SABATH subfamily. It depends on Mg(2+) as a cofactor.

It catalyses the reaction benzoate + S-adenosyl-L-methionine = methyl benzoate + S-adenosyl-L-homocysteine. Methyltransferase involved in the biosynthesis of methyl benzoate in response to stresses. Utilizes exclusively benzoic acid (BA) as substrate. The sequence is that of Benzoate O-methyltransferase (OMT8) from Zea mays (Maize).